The chain runs to 630 residues: tRNA uridine 5-carboxymethylaminomethyl modification enzyme MnmG (630 aa).

Residue Gly13–Gly18 participates in FAD binding. Gly273–Phe287 lines the NAD(+) pocket.

The protein belongs to the MnmG family. Homodimer. Heterotetramer of two MnmE and two MnmG subunits. FAD is required as a cofactor.

The protein localises to the cytoplasm. NAD-binding protein involved in the addition of a carboxymethylaminomethyl (cmnm) group at the wobble position (U34) of certain tRNAs, forming tRNA-cmnm(5)s(2)U34. This Actinobacillus pleuropneumoniae serotype 5b (strain L20) protein is tRNA uridine 5-carboxymethylaminomethyl modification enzyme MnmG.